The primary structure comprises 472 residues: ATP synthase subunit beta (472 aa).

G150–T157 lines the ATP pocket.

It belongs to the ATPase alpha/beta chains family. In terms of assembly, F-type ATPases have 2 components, CF(1) - the catalytic core - and CF(0) - the membrane proton channel. CF(1) has five subunits: alpha(3), beta(3), gamma(1), delta(1), epsilon(1). CF(0) has four main subunits: a, b, b' and c.

Its subcellular location is the cellular chromatophore membrane. The enzyme catalyses ATP + H2O + 4 H(+)(in) = ADP + phosphate + 5 H(+)(out). In terms of biological role, produces ATP from ADP in the presence of a proton gradient across the membrane. The catalytic sites are hosted primarily by the beta subunits. The polypeptide is ATP synthase subunit beta (Rhodobacter capsulatus (Rhodopseudomonas capsulata)).